The primary structure comprises 194 residues: Peptidyl-tRNA hydrolase (194 aa).

Y17 is a binding site for tRNA. Catalysis depends on H22, which acts as the Proton acceptor. Residues Y68, N70, and N116 each contribute to the tRNA site.

The protein belongs to the PTH family. As to quaternary structure, monomer.

The protein resides in the cytoplasm. It carries out the reaction an N-acyl-L-alpha-aminoacyl-tRNA + H2O = an N-acyl-L-amino acid + a tRNA + H(+). Hydrolyzes ribosome-free peptidyl-tRNAs (with 1 or more amino acids incorporated), which drop off the ribosome during protein synthesis, or as a result of ribosome stalling. In terms of biological role, catalyzes the release of premature peptidyl moieties from peptidyl-tRNA molecules trapped in stalled 50S ribosomal subunits, and thus maintains levels of free tRNAs and 50S ribosomes. This chain is Peptidyl-tRNA hydrolase, found in Pseudomonas syringae pv. tomato (strain ATCC BAA-871 / DC3000).